The following is a 292-amino-acid chain: Protease HtpX (292 aa).

Helical transmembrane passes span 4–24 (IVLF…ILFL) and 32–52 (IYGL…LSLI). H139 lines the Zn(2+) pocket. The active site involves E140. H143 is a binding site for Zn(2+). Helical transmembrane passes span 147 to 167 (GDMI…IFIS) and 193 to 213 (FVYF…ASII). Position 222 (E222) interacts with Zn(2+).

This sequence belongs to the peptidase M48B family. It depends on Zn(2+) as a cofactor.

It localises to the cell membrane. The protein is Protease HtpX of Buchnera aphidicola subsp. Acyrthosiphon pisum (strain 5A).